Here is a 98-residue protein sequence, read N- to C-terminus: NADH-ubiquinone oxidoreductase chain 4L (98 aa).

The next 3 membrane-spanning stretches (helical) occupy residues 1-21 (MPYIYMNITLAFVISLIGTLM), 29-49 (SLLCLEGMMLSLFTLNALLSL), and 61-81 (LILLVFAACEAAVGLALLIMI).

Belongs to the complex I subunit 4L family. Core subunit of respiratory chain NADH dehydrogenase (Complex I) which is composed of 45 different subunits.

It localises to the mitochondrion inner membrane. It carries out the reaction a ubiquinone + NADH + 5 H(+)(in) = a ubiquinol + NAD(+) + 4 H(+)(out). Core subunit of the mitochondrial membrane respiratory chain NADH dehydrogenase (Complex I) which catalyzes electron transfer from NADH through the respiratory chain, using ubiquinone as an electron acceptor. Part of the enzyme membrane arm which is embedded in the lipid bilayer and involved in proton translocation. This chain is NADH-ubiquinone oxidoreductase chain 4L (MT-ND4L), found in Mammuthus primigenius (Siberian woolly mammoth).